A 1090-amino-acid polypeptide reads, in one-letter code: Protein unc-13 homolog D (1090 aa).

Positions 92 to 239 constitute a C2 1 domain; sequence EPEEHQQTLQ…FKEARKDKGQ (148 aa). Aspartate 127 and aspartate 133 together coordinate Ca(2+). A Phosphoserine modification is found at serine 150. Aspartate 206 and aspartate 208 together coordinate Ca(2+). An interaction with RAB27A region spans residues 240–543; sequence DDFLGNVVLR…AKRVQDHTTV (304 aa). The region spanning 557-677 is the MHD1 domain; that stretch reads FQLYISLKEL…RLALVYCSLI (121 aa). The 108-residue stretch at 788-895 folds into the MHD2 domain; that stretch reads EDAILPLMKF…ASSRELIRKY (108 aa). The C2 2 domain occupies 910 to 1035; the sequence is ELGAVTVKAS…PGLSGSEEPG (126 aa). Ca(2+) contacts are provided by leucine 940, aspartate 941, aspartate 947, aspartate 1005, aspartate 1007, and aspartate 1013. The disordered stretch occupies residues 1026 to 1048; sequence PGLSGSEEPGEVPQTRLPLTYPA.

Belongs to the unc-13 family. As to quaternary structure, interacts with DOC2A. Interacts with RAB27A. Interacts with RHOG; the interaction increases RhoG affinity to the membrane lipids, targets UNC13D to membrane lipids and facilitates cytotoxic granule (CG) docking to the plasma membrane. The cofactor is Ca(2+). Expressed at high levels in spleen, thymus and leukocytes. Also expressed in lung and placenta, and at very low levels in brain, heart, skeletal muscle and kidney. Expressed in cytotoxic T-lymphocytes (CTL) and mast cells.

It is found in the cytoplasm. The protein localises to the membrane. It localises to the late endosome. Its subcellular location is the recycling endosome. The protein resides in the lysosome. Its function is as follows. Plays a role in cytotoxic granule exocytosis in lymphocytes. Required for both granule maturation and granule docking and priming at the immunologic synapse. Regulates assembly of recycling and late endosomal structures, leading to the formation of an endosomal exocytic compartment that fuses with perforin-containing granules at the immunologic synapse and licences them for exocytosis. Regulates Ca(2+)-dependent secretory lysosome exocytosis in mast cells. The polypeptide is Protein unc-13 homolog D (UNC13D) (Homo sapiens (Human)).